A 280-amino-acid chain; its full sequence is Ribosomal protein L11 methyltransferase (280 aa).

Residues threonine 131, glycine 152, aspartate 174, and asparagine 217 each contribute to the S-adenosyl-L-methionine site.

Belongs to the methyltransferase superfamily. PrmA family.

It is found in the cytoplasm. It catalyses the reaction L-lysyl-[protein] + 3 S-adenosyl-L-methionine = N(6),N(6),N(6)-trimethyl-L-lysyl-[protein] + 3 S-adenosyl-L-homocysteine + 3 H(+). Methylates ribosomal protein L11. The chain is Ribosomal protein L11 methyltransferase from Bacteroides thetaiotaomicron (strain ATCC 29148 / DSM 2079 / JCM 5827 / CCUG 10774 / NCTC 10582 / VPI-5482 / E50).